Reading from the N-terminus, the 241-residue chain is Endothelial protein C receptor (241 aa).

A signal peptide spans 1–20 (MLTKFLSLLLLLLLLGCAFC). Topologically, residues 21 to 213 (NSDGSQSLHM…GSQTGRSYTS (193 aa)) are extracellular. N-linked (GlcNAc...) asparagine glycans are attached at residues asparagine 47, asparagine 64, asparagine 139, asparagine 165, and asparagine 175. Residues 214–234 (LVLGILMGCFIIAGVAVGIFL) form a helical membrane-spanning segment. Topologically, residues 235-241 (CTGGRRC) are cytoplasmic.

It is found in the membrane. Binds activated protein C. Enhances protein C activation by the thrombin-thrombomodulin complex; plays a role in the protein C pathway controlling blood coagulation. This Rattus norvegicus (Rat) protein is Endothelial protein C receptor (Procr).